Reading from the N-terminus, the 107-residue chain is Protamine-2 (107 aa).

The disordered stretch occupies residues 1–94; sequence MVRYRMRSPS…RRGCRRSRRR (94 aa). Phosphoserine occurs at positions 8, 10, and 33. The span at 43–94 shows a compositional bias: basic residues; the sequence is THRGHHHHRHRRCSRKRLHRIHKRRRSCRRRRRHSCRHRRRHRRGCRRSRRR.

The protein belongs to the protamine P2 family. As to quaternary structure, interacts with TDRP. In terms of processing, proteolytic processing into mature chains is required for histone eviction during spermatogenesis. Transition proteins (TNP1 and TNP2) are required for processing. As to expression, expressed in spermatids (at protein level).

It localises to the nucleus. The protein localises to the chromosome. In terms of biological role, protamines substitute for histones in the chromatin of sperm during the haploid phase of spermatogenesis. They compact sperm DNA into a highly condensed, stable and inactive complex. The chain is Protamine-2 (Prm2) from Mus musculus (Mouse).